The chain runs to 374 residues: Carbamoyl phosphate synthase small chain (374 aa).

The interval 1–183 (MVLADGQMIW…QNGYSVVDNQ (183 aa)) is CPSase. Positions 41, 235, and 237 each coordinate L-glutamine. Positions 187-374 (HVVAIDYGLK…FIDLIAKERP (188 aa)) constitute a Glutamine amidotransferase type-1 domain. C264 acts as the Nucleophile in catalysis. L265, Q268, N306, G308, and F309 together coordinate L-glutamine. Catalysis depends on residues H348 and E350.

This sequence belongs to the CarA family. As to quaternary structure, composed of two chains; the small (or glutamine) chain promotes the hydrolysis of glutamine to ammonia, which is used by the large (or ammonia) chain to synthesize carbamoyl phosphate. Tetramer of heterodimers (alpha,beta)4.

The enzyme catalyses hydrogencarbonate + L-glutamine + 2 ATP + H2O = carbamoyl phosphate + L-glutamate + 2 ADP + phosphate + 2 H(+). It carries out the reaction L-glutamine + H2O = L-glutamate + NH4(+). Its pathway is amino-acid biosynthesis; L-arginine biosynthesis; carbamoyl phosphate from bicarbonate: step 1/1. It participates in pyrimidine metabolism; UMP biosynthesis via de novo pathway; (S)-dihydroorotate from bicarbonate: step 1/3. Functionally, small subunit of the glutamine-dependent carbamoyl phosphate synthetase (CPSase). CPSase catalyzes the formation of carbamoyl phosphate from the ammonia moiety of glutamine, carbonate, and phosphate donated by ATP, constituting the first step of 2 biosynthetic pathways, one leading to arginine and/or urea and the other to pyrimidine nucleotides. The small subunit (glutamine amidotransferase) binds and cleaves glutamine to supply the large subunit with the substrate ammonia. The chain is Carbamoyl phosphate synthase small chain from Zymomonas mobilis subsp. mobilis (strain ATCC 31821 / ZM4 / CP4).